We begin with the raw amino-acid sequence, 77 residues long: uncharacterized protein (77 aa).

This is an uncharacterized protein from Acidianus hospitalis (AFV-1).